A 626-amino-acid polypeptide reads, in one-letter code: Mitogen-activated protein kinase kinase kinase 3 (626 aa).

Residues 44–123 (DVRIKFEHNG…KSLRILLLSQ (80 aa)) form the PB1 domain. 2 disordered regions span residues 125-184 (RNHT…YVPE) and 218-273 (SSAE…VKGG). Polar residues-rich tracts occupy residues 128–137 (TSSSPHSGVS), 144–155 (PSQSAGDINTIY), 165–174 (LSVSSQNPGR), and 219–247 (SAEN…QMSR). A phosphoserine mark is found at Ser147 and Ser166. 2 positions are modified to phosphoserine: Ser250 and Ser312. Basic and acidic residues predominate over residues 250-270 (SFPDNRKECSDRETQLYDKGV). Ser337 is subject to Phosphoserine; by SGK1. Position 340 is a phosphoserine (Ser340). The region spanning 362–622 (WRRGKLLGQG…AEELLTHHFA (261 aa)) is the Protein kinase domain. Residues 368 to 376 (LGQGAFGRV) and Lys391 each bind ATP. Asp489 (proton acceptor) is an active-site residue.

This sequence belongs to the protein kinase superfamily. STE Ser/Thr protein kinase family. MAP kinase kinase kinase subfamily. Binds both upstream activators and downstream substrates in multimolecular complexes. Part of a complex with MAP2K3, RAC1 and CCM2. Interacts with MAP2K5 and SPAG9. Requires Mg(2+) as cofactor. Post-translationally, phosphorylation at Ser-166 and Ser-337 by SGK1 inhibits its activity.

It carries out the reaction L-seryl-[protein] + ATP = O-phospho-L-seryl-[protein] + ADP + H(+). The catalysed reaction is L-threonyl-[protein] + ATP = O-phospho-L-threonyl-[protein] + ADP + H(+). Activated by phosphorylation on Thr-530. Functionally, component of a protein kinase signal transduction cascade. Mediates activation of the NF-kappa-B, AP1 and DDIT3 transcriptional regulators. In Mus musculus (Mouse), this protein is Mitogen-activated protein kinase kinase kinase 3 (Map3k3).